Here is a 129-residue protein sequence, read N- to C-terminus: Large ribosomal subunit protein bL20 (129 aa).

This sequence belongs to the bacterial ribosomal protein bL20 family.

In terms of biological role, binds directly to 23S ribosomal RNA and is necessary for the in vitro assembly process of the 50S ribosomal subunit. It is not involved in the protein synthesizing functions of that subunit. The protein is Large ribosomal subunit protein bL20 of Rhodococcus jostii (strain RHA1).